We begin with the raw amino-acid sequence, 125 residues long: Large ribosomal subunit protein bL12 (125 aa).

As to quaternary structure, homodimer. Part of the ribosomal stalk of the 50S ribosomal subunit. Forms a multimeric L10(L12)X complex, where L10 forms an elongated spine to which 2 to 4 L12 dimers bind in a sequential fashion. Binds GTP-bound translation factors. Post-translationally, two isoforms seem to exist. One is probably dimethylated on Lys-69 and monomethylated on Lys-86 while the other is probably acetylated or trimethylated on both Lys-86 and Lys-89.

Its function is as follows. Forms part of the ribosomal stalk which helps the ribosome interact with GTP-bound translation factors. Is thus essential for accurate translation. This is Large ribosomal subunit protein bL12 from Rhodopseudomonas palustris (strain ATCC BAA-98 / CGA009).